A 556-amino-acid chain; its full sequence is Pumilio homolog 11 (556 aa).

The PUM-HD domain maps to 215-556; sequence GGSRELDGSA…RIFSKNLWKK (342 aa). Pumilio repeat units follow at residues 238 to 276, 277 to 313, 316 to 351, 353 to 388, 389 to 424, 425 to 459, 460 to 495, and 496 to 531; these read SMVD…IIFK, EVIN…ILIR, SKPG…SLVK, ALVP…FILE, AATK…KLVD, EISR…VLFE, LRGN…VNEL, and VSVL…SLVE.

Its subcellular location is the cytoplasm. In terms of biological role, sequence-specific RNA-binding protein that regulates translation and mRNA stability by binding the 3'-UTR of target mRNAs. The polypeptide is Pumilio homolog 11 (APUM11) (Arabidopsis thaliana (Mouse-ear cress)).